A 155-amino-acid polypeptide reads, in one-letter code: Protein Smg homolog (155 aa).

Belongs to the Smg family.

This Methylococcus capsulatus (strain ATCC 33009 / NCIMB 11132 / Bath) protein is Protein Smg homolog.